The sequence spans 313 residues: Probable cell division protein WhiA (313 aa).

The H-T-H motif DNA-binding region spans 277–311 (SLKEVAAQVPDGPISKSGVNHRFQKIREMAQQLKE).

Belongs to the WhiA family.

Its function is as follows. Involved in cell division and chromosome segregation. The chain is Probable cell division protein WhiA from Lactobacillus gasseri (strain ATCC 33323 / DSM 20243 / BCRC 14619 / CIP 102991 / JCM 1131 / KCTC 3163 / NCIMB 11718 / NCTC 13722 / AM63).